The following is a 920-amino-acid chain: 2-oxoadipate dehydrogenase complex component E1 (920 aa).

A disordered region spans residues Gln-299–Pro-322. The span at Val-308–Pro-322 shows a compositional bias: basic and acidic residues.

This sequence belongs to the alpha-ketoglutarate dehydrogenase family. In terms of assembly, the 2-oxoadipate dehydrogenase complex is composed of OADH (2-oxoadipate dehydrogenase; E1a), DLST (dihydrolipoamide succinyltransferase; E2) and DLD (dihydrolipoamide dehydrogenase; E3). E1a functional unit is a dimer. Thiamine diphosphate is required as a cofactor.

Its subcellular location is the mitochondrion. It catalyses the reaction N(6)-[(R)-lipoyl]-L-lysyl-[protein] + 2-oxoadipate + H(+) = N(6)-[(R)-S(8)-glutaryldihydrolipoyl]-L-lysyl-[protein] + CO2. It participates in amino-acid degradation. Functionally, 2-oxoadipate dehydrogenase (E1a) component of the 2-oxoadipate dehydrogenase complex (OADHC). Participates in the first step, rate limiting for the overall conversion of 2-oxoadipate (alpha-ketoadipate) to glutaryl-CoA and CO(2) catalyzed by the whole OADHC. Catalyzes the irreversible decarboxylation of 2-oxoadipate via the thiamine diphosphate (ThDP) cofactor and subsequent transfer of the decarboxylated acyl intermediate on an oxidized dihydrolipoyl group that is covalently amidated to the E2 enzyme (dihydrolipoyllysine-residue succinyltransferase or DLST). Can catalyze the decarboxylation of 2-oxoglutarate in vitro, but at a much lower rate than 2-oxoadipate. Responsible for the last step of L-lysine, L-hydroxylysine and L-tryptophan catabolism with the common product being 2-oxoadipate. The protein is 2-oxoadipate dehydrogenase complex component E1 (dhtkd1) of Danio rerio (Zebrafish).